Here is a 328-residue protein sequence, read N- to C-terminus: Reticulocalbin-3 (328 aa).

An N-terminal signal peptide occupies residues 1–20 (MMWRPSVLLLLLLLRHGAQG). The segment at 19 to 49 (QGKPSPDAGPHGQGRVHQAAPLSDAPHDDAH) is disordered. EF-hand domains are found at residues 75-112 (ESQA…TQQR), 113-148 (HIRD…HYAP), 163-198 (KMLA…EEFP), 200-235 (MRDI…AEPG), 241-276 (WVQT…PAQD), and 277-312 (QPLV…FVGS). Residues D92, D94, W96, E101, D126, D128, D130, R132, and E137 each coordinate Ca(2+). N140 carries N-linked (GlcNAc...) asparagine glycosylation. The Ca(2+) site is built by D176, D178, D180, M182, E187, D213, N215, D217, Y219, E224, D254, N256, D258, H260, E265, D290, D292, D294, R296, and E301. A Prevents secretion from ER motif is present at residues 325–328 (HDEL).

This sequence belongs to the CREC family. Interacts with PCSK6 (immature form including the propeptide); probably involved in the maturation and the secretion of PCSK6. Degraded by PCSK6 and other endoproteases including FURIN and PCSK5. Post-translationally, N-glycosylated. Widely expressed.

The protein localises to the endoplasmic reticulum lumen. Functionally, probable molecular chaperone assisting protein biosynthesis and transport in the endoplasmic reticulum. Required for the proper biosynthesis and transport of pulmonary surfactant-associated protein A/SP-A, pulmonary surfactant-associated protein D/SP-D and the lipid transporter ABCA3. By regulating both the proper expression and the degradation through the endoplasmic reticulum-associated protein degradation pathway of these proteins plays a crucial role in pulmonary surfactant homeostasis. Has an anti-fibrotic activity by negatively regulating the secretion of type I and type III collagens. This calcium-binding protein also transiently associates with immature PCSK6 and regulates its secretion. The protein is Reticulocalbin-3 of Homo sapiens (Human).